The chain runs to 386 residues: Succinate--CoA ligase [ADP-forming] subunit beta (386 aa).

The 227-residue stretch at 9-235 folds into the ATP-grasp domain; that stretch reads KELFAKHDVP…REEEDPLESA (227 aa). ATP contacts are provided by residues K44, 51–53, A93, and E98; that span reads GRG. Residues N190 and D204 each coordinate Mg(2+). Substrate contacts are provided by residues N255 and 317–319; that span reads GIT.

This sequence belongs to the succinate/malate CoA ligase beta subunit family. In terms of assembly, heterotetramer of two alpha and two beta subunits. Requires Mg(2+) as cofactor.

The enzyme catalyses succinate + ATP + CoA = succinyl-CoA + ADP + phosphate. It carries out the reaction GTP + succinate + CoA = succinyl-CoA + GDP + phosphate. Its pathway is carbohydrate metabolism; tricarboxylic acid cycle; succinate from succinyl-CoA (ligase route): step 1/1. In terms of biological role, succinyl-CoA synthetase functions in the citric acid cycle (TCA), coupling the hydrolysis of succinyl-CoA to the synthesis of either ATP or GTP and thus represents the only step of substrate-level phosphorylation in the TCA. The beta subunit provides nucleotide specificity of the enzyme and binds the substrate succinate, while the binding sites for coenzyme A and phosphate are found in the alpha subunit. This is Succinate--CoA ligase [ADP-forming] subunit beta from Nocardioides sp. (strain ATCC BAA-499 / JS614).